A 62-amino-acid polypeptide reads, in one-letter code: MARITVQDAVEKIGNRFDLVLVASQRAREMQIFGKSPMVDKENDKYTVIALREIEQGLIEKQ.

This sequence belongs to the RNA polymerase subunit omega family. The RNAP catalytic core consists of 2 alpha, 1 beta, 1 beta' and 1 omega subunit. When a sigma factor is associated with the core the holoenzyme is formed, which can initiate transcription.

The catalysed reaction is RNA(n) + a ribonucleoside 5'-triphosphate = RNA(n+1) + diphosphate. Promotes RNA polymerase assembly. Latches the N- and C-terminal regions of the beta' subunit thereby facilitating its interaction with the beta and alpha subunits. The protein is DNA-directed RNA polymerase subunit omega of Wigglesworthia glossinidia brevipalpis.